The primary structure comprises 418 residues: MGGEAGCAAAVGAEGRVKSLGLVFEDERKGCYSSGETVAGHVLLEASEPVALRALRLEAQGRATAAWGPSTCPRASASTAALAVFSEVEYLNVRLSLREPPAGEGIILLQPGKHEFPFRFQLPSEPLVTSFTGKYGSIQYCVRAVLERPKVPDQSVKRELQVVSHVDVNTPALLTPVLKTQEKMVGCWFFTSGPVSLSAKIERKGYCNGEAIPIYAEIENCSSRLIVPKAAIFQTQTYLASGKTKTIRHMVANVRGNHIASGSTDTWNGKTLKIPPVTPSILDCCIIRVDYSLAVYIHIPGAKKLMLELPLVIGTIPYNGFGSRNSSIASQFSMDMSWLTLTLPEQPEAPPNYADVVSEEEFSRHIPPYPQPPNCEGEVCCPVFACIQEFRFQPPPLYSEVDPHPSDVEESQPVSFIL.

2 short sequence motifs (PPxY motif) span residues 350–353 (PPNY) and 395–398 (PPLY).

This sequence belongs to the arrestin family. As to quaternary structure, interacts with ADRB2. Interacts (via PPxY motifs) with ITCH, NEDD4L and WWP2. Interacts with AVPR2. Identified in a complex containing at least ARRDC4, AVPR2 and HGS. Interacts with SLC11A2; controls the incorporation of SLC11A2 into extracellular vesicles through an ubiquitination-dependent mechanism. Interacts with TRIM65.

It is found in the early endosome. The protein localises to the cell membrane. Its subcellular location is the cytoplasmic vesicle. In terms of biological role, functions as an adapter recruiting ubiquitin-protein ligases to their specific substrates. Plays a role in endocytosis of activated G protein-coupled receptors (GPCRs). Through an ubiquitination-dependent mechanism also plays a role in the incorporation of SLC11A2 into extracellular vesicles. May play a role in glucose uptake. Participates in innate immune response by promoting IFIH1/MDA5 activation through interaction with TRIM65. This Homo sapiens (Human) protein is Arrestin domain-containing protein 4 (ARRDC4).